Reading from the N-terminus, the 338-residue chain is Glycerol-3-phosphate dehydrogenase [NAD(P)+] (338 aa).

Ser-12, Trp-13, Lys-34, and Lys-110 together coordinate NADPH. Residues Lys-110, Gly-141, and Ser-143 each contribute to the sn-glycerol 3-phosphate site. Residue Ala-145 participates in NADPH binding. Residues Lys-196, Asp-249, Ser-259, Arg-260, and Asn-261 each contribute to the sn-glycerol 3-phosphate site. Residue Lys-196 is the Proton acceptor of the active site. Arg-260 is an NADPH binding site. Val-284 and Glu-286 together coordinate NADPH.

Belongs to the NAD-dependent glycerol-3-phosphate dehydrogenase family.

It is found in the cytoplasm. The catalysed reaction is sn-glycerol 3-phosphate + NAD(+) = dihydroxyacetone phosphate + NADH + H(+). It carries out the reaction sn-glycerol 3-phosphate + NADP(+) = dihydroxyacetone phosphate + NADPH + H(+). It participates in membrane lipid metabolism; glycerophospholipid metabolism. Functionally, catalyzes the reduction of the glycolytic intermediate dihydroxyacetone phosphate (DHAP) to sn-glycerol 3-phosphate (G3P), the key precursor for phospholipid synthesis. The polypeptide is Glycerol-3-phosphate dehydrogenase [NAD(P)+] (Ligilactobacillus salivarius (strain UCC118) (Lactobacillus salivarius)).